A 184-amino-acid polypeptide reads, in one-letter code: Uroplakin-2 (184 aa).

Residues 1 to 25 form the signal peptide; it reads MASTLPVQTLPLILILLAVLAPGTA. A propeptide spanning residues 26-84 is cleaved from the precursor; the sequence is DFNISSLSGLLSPALTESLLIALPPCHLTGGNATLMVRRANDSKVVKSDFVVPPCRGRR. Asn-28, Asn-57, and Asn-66 each carry an N-linked (GlcNAc...) asparagine glycan. Residues 85–155 are Lumenal-facing; that stretch reads ELVSVVDSGS…IGLGMARTGG (71 aa). A helical membrane pass occupies residues 156 to 180; sequence MVVITVLLSVAMFLLVVGLIVALHW. Topologically, residues 181 to 184 are cytoplasmic; sequence DARK.

The protein belongs to the uroplakin-2 family. Interacts with uroplakin-1a (UPK1A).

The protein resides in the cell membrane. Its function is as follows. Component of the asymmetric unit membrane (AUM); a highly specialized biomembrane elaborated by terminally differentiated urothelial cells. May play an important role in regulating the assembly of the AUM. This chain is Uroplakin-2 (Upk2), found in Mus musculus (Mouse).